A 3092-amino-acid chain; its full sequence is Inhibitory regulator protein IRA1 (3092 aa).

Disordered regions lie at residues 375 to 430 (HLHH…MASL) and 450 to 487 (LGQA…NSAN). The span at 379–400 (SSSSSKTTNTNSPNSISKTSIK) shows a compositional bias: low complexity. The span at 401–430 (QSSVNASGNVSPSQFSTGNDASPTSPMASL) shows a compositional bias: polar residues. Over residues 455-487 (TSTSTTAATTKTDADTPSTMNTNNNNNNNNSAN) the composition is skewed to low complexity. A phosphoserine mark is found at Ser497 and Ser915. Disordered regions lie at residues 946–988 (SGVP…VLSS) and 1003–1023 (TILK…ADDK). Residues 965–988 (QSPYSSPPQLQQSDLPSPLSVLSS) show a composition bias toward low complexity. A Phosphoserine modification is found at Ser1342. Residues 1725–1930 (NASHILVTEL…DKIFNFLSEL (206 aa)) enclose the Ras-GAP domain. Phosphoserine; by PKA is present on residues Ser1753 and Ser3004.

It is found in the cytoplasm. Functionally, inhibitory regulator of the Ras-cyclic AMP pathway in S.cerevisiae. Stimulates the GTPase activity of Ras proteins. The polypeptide is Inhibitory regulator protein IRA1 (IRA1) (Saccharomyces cerevisiae (strain ATCC 204508 / S288c) (Baker's yeast)).